Consider the following 226-residue polypeptide: Urease accessory protein UreF (226 aa).

It belongs to the UreF family. As to quaternary structure, ureD, UreF and UreG form a complex that acts as a GTP-hydrolysis-dependent molecular chaperone, activating the urease apoprotein by helping to assemble the nickel containing metallocenter of UreC. The UreE protein probably delivers the nickel.

The protein localises to the cytoplasm. Its function is as follows. Required for maturation of urease via the functional incorporation of the urease nickel metallocenter. This is Urease accessory protein UreF from Burkholderia vietnamiensis (strain G4 / LMG 22486) (Burkholderia cepacia (strain R1808)).